The following is a 347-amino-acid chain: Ribosomal RNA small subunit methyltransferase C (347 aa).

Belongs to the methyltransferase superfamily. RsmC family. Monomer.

It is found in the cytoplasm. The enzyme catalyses guanosine(1207) in 16S rRNA + S-adenosyl-L-methionine = N(2)-methylguanosine(1207) in 16S rRNA + S-adenosyl-L-homocysteine + H(+). In terms of biological role, specifically methylates the guanine in position 1207 of 16S rRNA in the 30S particle. The chain is Ribosomal RNA small subunit methyltransferase C from Yersinia pseudotuberculosis serotype O:1b (strain IP 31758).